Here is a 223-residue protein sequence, read N- to C-terminus: Putative N-acetylmannosamine-6-phosphate 2-epimerase (223 aa).

This sequence belongs to the NanE family.

The catalysed reaction is an N-acyl-D-glucosamine 6-phosphate = an N-acyl-D-mannosamine 6-phosphate. Its pathway is amino-sugar metabolism; N-acetylneuraminate degradation; D-fructose 6-phosphate from N-acetylneuraminate: step 3/5. Converts N-acetylmannosamine-6-phosphate (ManNAc-6-P) to N-acetylglucosamine-6-phosphate (GlcNAc-6-P). The polypeptide is Putative N-acetylmannosamine-6-phosphate 2-epimerase (Staphylococcus haemolyticus (strain JCSC1435)).